A 263-amino-acid polypeptide reads, in one-letter code: 5'-nucleotidase SurE (263 aa).

A divalent metal cation contacts are provided by D8, D9, S40, and N98.

Belongs to the SurE nucleotidase family. A divalent metal cation serves as cofactor.

It is found in the cytoplasm. The catalysed reaction is a ribonucleoside 5'-phosphate + H2O = a ribonucleoside + phosphate. Functionally, nucleotidase that shows phosphatase activity on nucleoside 5'-monophosphates. The chain is 5'-nucleotidase SurE from Gloeobacter violaceus (strain ATCC 29082 / PCC 7421).